A 355-amino-acid polypeptide reads, in one-letter code: MRGVLIAAMVALVVSLLGTPWVIRLFRRQGYGQEIREDGPSSHLTKRGTPTMGGTVIIVAALAGYFLAHLVTGIGFTASGLLVLMVMTGLGLVGFLDDYIKIRKQRSLGLTARMKFTGQAAVAIVFGLLAVRFKNDAGLLPGSTYISIVRDTSLSVGIIAFPLLAWIIIAATSNAVNLTDGLDGLAAGTSAMVFGAYVIISFWQFGNLCEPHAAEAGCYLVRDPLDVALVAAAAMGACFGFLWWNASPAKIFMGDTGSLALGGAFASIAIVSRTELLLVVLGGLFVIETLSVMIQVAFFKATKKRVFNMAPIHHHFELAEWPETTVIIRFWIVSGLAVAFGLGLFYAEFLSHGGG.

The next 10 helical transmembrane spans lie at 3 to 23 (GVLI…PWVI), 56 to 76 (VIIV…GIGF), 80 to 100 (GLLV…DDYI), 120 to 140 (AAVA…AGLL), 156 to 176 (VGII…SNAV), 185 to 205 (LAAG…FWQF), 224 to 244 (PLDV…FLWW), 251 to 271 (IFMG…IAIV), 276 to 296 (LLLV…MIQV), and 330 to 350 (FWIV…AEFL).

This sequence belongs to the glycosyltransferase 4 family. MraY subfamily. The cofactor is Mg(2+).

It localises to the cell membrane. It catalyses the reaction UDP-N-acetyl-alpha-D-muramoyl-L-alanyl-gamma-D-glutamyl-meso-2,6-diaminopimeloyl-D-alanyl-D-alanine + di-trans,octa-cis-undecaprenyl phosphate = di-trans,octa-cis-undecaprenyl diphospho-N-acetyl-alpha-D-muramoyl-L-alanyl-D-glutamyl-meso-2,6-diaminopimeloyl-D-alanyl-D-alanine + UMP. It functions in the pathway cell wall biogenesis; peptidoglycan biosynthesis. Catalyzes the initial step of the lipid cycle reactions in the biosynthesis of the cell wall peptidoglycan: transfers peptidoglycan precursor phospho-MurNAc-pentapeptide from UDP-MurNAc-pentapeptide onto the lipid carrier undecaprenyl phosphate, yielding undecaprenyl-pyrophosphoryl-MurNAc-pentapeptide, known as lipid I. This chain is Phospho-N-acetylmuramoyl-pentapeptide-transferase, found in Frankia casuarinae (strain DSM 45818 / CECT 9043 / HFP020203 / CcI3).